A 273-amino-acid chain; its full sequence is Putative phosphoenolpyruvate synthase regulatory protein (273 aa).

153–160 (GVSRSGKT) serves as a coordination point for ADP.

Belongs to the pyruvate, phosphate/water dikinase regulatory protein family. PSRP subfamily.

It catalyses the reaction [pyruvate, water dikinase] + ADP = [pyruvate, water dikinase]-phosphate + AMP + H(+). The catalysed reaction is [pyruvate, water dikinase]-phosphate + phosphate + H(+) = [pyruvate, water dikinase] + diphosphate. Bifunctional serine/threonine kinase and phosphorylase involved in the regulation of the phosphoenolpyruvate synthase (PEPS) by catalyzing its phosphorylation/dephosphorylation. This chain is Putative phosphoenolpyruvate synthase regulatory protein, found in Variovorax paradoxus (strain S110).